A 97-amino-acid chain; its full sequence is Large ribosomal subunit protein uL23 (97 aa).

It belongs to the universal ribosomal protein uL23 family. In terms of assembly, part of the 50S ribosomal subunit. Contacts protein L29, and trigger factor when it is bound to the ribosome.

Functionally, one of the early assembly proteins it binds 23S rRNA. One of the proteins that surrounds the polypeptide exit tunnel on the outside of the ribosome. Forms the main docking site for trigger factor binding to the ribosome. The sequence is that of Large ribosomal subunit protein uL23 from Lactiplantibacillus plantarum (strain ATCC BAA-793 / NCIMB 8826 / WCFS1) (Lactobacillus plantarum).